The following is a 106-amino-acid chain: Met repressor (106 aa).

It belongs to the MetJ family. In terms of assembly, homodimer.

It is found in the cytoplasm. Functionally, this regulatory protein, when combined with SAM (S-adenosylmethionine) represses the expression of the methionine regulon and of enzymes involved in SAM synthesis. The sequence is that of Met repressor from Vibrio campbellii (strain ATCC BAA-1116).